Consider the following 270-residue polypeptide: Formamidopyrimidine-DNA glycosylase (270 aa).

Catalysis depends on proline 2, which acts as the Schiff-base intermediate with DNA. Glutamate 3 (proton donor) is an active-site residue. Catalysis depends on lysine 58, which acts as the Proton donor; for beta-elimination activity. Residues histidine 91, arginine 110, and arginine 151 each coordinate DNA. The FPG-type zinc finger occupies 236–270 (FVYGRGGEFCKVCGSTLREIRLGQRASVYCPRCQR). The active-site Proton donor; for delta-elimination activity is the arginine 260.

This sequence belongs to the FPG family. In terms of assembly, monomer. Requires Zn(2+) as cofactor.

The catalysed reaction is Hydrolysis of DNA containing ring-opened 7-methylguanine residues, releasing 2,6-diamino-4-hydroxy-5-(N-methyl)formamidopyrimidine.. It carries out the reaction 2'-deoxyribonucleotide-(2'-deoxyribose 5'-phosphate)-2'-deoxyribonucleotide-DNA = a 3'-end 2'-deoxyribonucleotide-(2,3-dehydro-2,3-deoxyribose 5'-phosphate)-DNA + a 5'-end 5'-phospho-2'-deoxyribonucleoside-DNA + H(+). Involved in base excision repair of DNA damaged by oxidation or by mutagenic agents. Acts as a DNA glycosylase that recognizes and removes damaged bases. Has a preference for oxidized purines, such as 7,8-dihydro-8-oxoguanine (8-oxoG). Has AP (apurinic/apyrimidinic) lyase activity and introduces nicks in the DNA strand. Cleaves the DNA backbone by beta-delta elimination to generate a single-strand break at the site of the removed base with both 3'- and 5'-phosphates. The sequence is that of Formamidopyrimidine-DNA glycosylase from Pseudomonas paraeruginosa (strain DSM 24068 / PA7) (Pseudomonas aeruginosa (strain PA7)).